We begin with the raw amino-acid sequence, 557 residues long: Dihydroxy-acid dehydratase (557 aa).

Residue C50 coordinates [2Fe-2S] cluster. D82 is a binding site for Mg(2+). C123 lines the [2Fe-2S] cluster pocket. 2 residues coordinate Mg(2+): D124 and K125. K125 is subject to N6-carboxylysine. C195 contributes to the [2Fe-2S] cluster binding site. E447 contributes to the Mg(2+) binding site. S473 (proton acceptor) is an active-site residue.

It belongs to the IlvD/Edd family. Homodimer. [2Fe-2S] cluster serves as cofactor. The cofactor is Mg(2+).

The catalysed reaction is (2R)-2,3-dihydroxy-3-methylbutanoate = 3-methyl-2-oxobutanoate + H2O. It carries out the reaction (2R,3R)-2,3-dihydroxy-3-methylpentanoate = (S)-3-methyl-2-oxopentanoate + H2O. Its pathway is amino-acid biosynthesis; L-isoleucine biosynthesis; L-isoleucine from 2-oxobutanoate: step 3/4. It functions in the pathway amino-acid biosynthesis; L-valine biosynthesis; L-valine from pyruvate: step 3/4. Its function is as follows. Functions in the biosynthesis of branched-chain amino acids. Catalyzes the dehydration of (2R,3R)-2,3-dihydroxy-3-methylpentanoate (2,3-dihydroxy-3-methylvalerate) into 2-oxo-3-methylpentanoate (2-oxo-3-methylvalerate) and of (2R)-2,3-dihydroxy-3-methylbutanoate (2,3-dihydroxyisovalerate) into 2-oxo-3-methylbutanoate (2-oxoisovalerate), the penultimate precursor to L-isoleucine and L-valine, respectively. In Burkholderia mallei (strain NCTC 10247), this protein is Dihydroxy-acid dehydratase.